A 595-amino-acid chain; its full sequence is Glycine betaine transporter BetP (595 aa).

The Cytoplasmic portion of the chain corresponds to 1–59; that stretch reads MTTSDPNPKPIVEDAQPEQITATEELAGLLENPTNLEGKLADAEEEIILEGEDTQASLN. Residues 60–80 form a helical membrane-spanning segment; sequence WSVIVPALVIVLATVVWGIGF. Residues 81–98 are Periplasmic-facing; that stretch reads KDSFTNFASSALSAVVDN. Residues 99 to 119 traverse the membrane as a helical segment; it reads LGWAFILFGTVFVFFIVVIAA. Topologically, residues 120 to 137 are cytoplasmic; it reads SKFGTIRLGRIDEAPEFR. The chain crosses the membrane as a helical span at residues 138–158; that stretch reads TVSWISMMFAAGMGIGLMFYG. A147, A148, and M150 together coordinate Na(+). Residue 152-153 participates in glycine betaine binding; sequence IG. Residues 159–185 are Periplasmic-facing; the sequence is TTEPLTFYRNGVPGHDEHNVGVAMSTT. A helical transmembrane segment spans residues 186-206; the sequence is MFHWTLHPWAIYAIVGLAIAY. At 207–236 the chain is on the cytoplasmic side; sequence STFRVGRKQLLSSAFVPLIGEKGAEGWLGK. The helical transmembrane segment at 237-257 threads the bilayer; the sequence is LIDILAIIATVFGTACSLGLG. Residue S253 coordinates glycine betaine. Topologically, residues 258–276 are periplasmic; that stretch reads ALQIGAGLSAANIIEDPSD. A helical transmembrane segment spans residues 277 to 296; sequence WTIVGIVSVLTLAFIFSAIS. The Cytoplasmic portion of the chain corresponds to 297–299; that stretch reads GVG. A helical membrane pass occupies residues 300–323; the sequence is KGIQYLSNANMVLAALLAIFVFVV. Na(+) is bound by residues S306 and M310. Over 324–365 the chain is Periplasmic; that stretch reads GPTVSILNLLPGSIGNYLSNFFQMAGRTAMSADGTAGEWLGS. A helical transmembrane segment spans residues 366 to 386; the sequence is WTIFYWAWWISWSPFVGMFLA. Glycine betaine is bound at residue 373–377; it reads WWISW. Over 387–396 the chain is Cytoplasmic; that stretch reads RISRGRSIRE. A helical membrane pass occupies residues 397–417; it reads FILGVLLVPAGVSTVWFSIFG. Over 418–451 the chain is Periplasmic; that stretch reads GTAIVFEQNGESIWGDGAAEEQLFGLLHALPGGQ. The helical transmembrane segment at 452 to 476 threads the bilayer; sequence IMGIIAMILLGTFFITSADSASTVM. Over 477–489 the chain is Cytoplasmic; that stretch reads GTMSQHGQLEANK. A helical transmembrane segment spans residues 490 to 510; sequence WVTAAWGVATAAIGLTLLLSG. Residues 511-520 are Periplasmic-facing; sequence GDNALSNLQN. Residues 521-541 form a helical membrane-spanning segment; sequence VTIVAATPFLFVVIGLMFALV. The Cytoplasmic segment spans residues 542 to 595; the sequence is KDLSNDVIYLEYREQQRFNARLARERRVHNEHRKRELAAKRRRERKASGAGKRR. The tract at residues 570-595 is disordered; that stretch reads HNEHRKRELAAKRRRERKASGAGKRR. Positions 581–595 are enriched in basic residues; it reads KRRRERKASGAGKRR.

This sequence belongs to the BCCT transporter (TC 2.A.15) family. In terms of assembly, homotrimer. The monomer can accumulate glycine betaine, but trimerization is required to properly respond to osmotic stress.

The protein localises to the cell inner membrane. Uptake is activated by hyperosmotic stress. Osmoresponsive activation is triggered by a change in the internal K(+) concentration. In addition, shows a pronounced chill stimulation, at temperatures around 10 degrees Celsius. Chill activation may be influenced by the membrane lipid composition. Uptake is completely abolished by the uncoupler CCCP, and to a different extent by the ionophores valinomycin and nigericin. Functionally, involved in response to osmotic stress. High-affinity glycine betaine-specific uptake system, which couples the uptake of glycine betaine to the symport of two Na(+) ions. Transport is driven both by the Na(+) gradient and by the electrical potential. In addition, functions both as an osmosensor and as an osmoregulator that transduces signal to the catalytic part of the carrier protein, which adapts its activity to the extent of osmotic stress. This is Glycine betaine transporter BetP from Corynebacterium glutamicum (strain ATCC 13032 / DSM 20300 / JCM 1318 / BCRC 11384 / CCUG 27702 / LMG 3730 / NBRC 12168 / NCIMB 10025 / NRRL B-2784 / 534).